The sequence spans 174 residues: Superoxide dismutase [Cu-Zn] (174 aa).

The signal sequence occupies residues 1-23 (MIRLSAAAALGLAAALAASPALA). 3 residues coordinate Cu cation: H68, H70, and H86. Residues C75 and C170 are joined by a disulfide bond. The Zn(2+) site is built by H86, H95, D104, and D107. H150 lines the Cu cation pocket.

Belongs to the Cu-Zn superoxide dismutase family. In terms of assembly, homodimer. It depends on Cu cation as a cofactor. Requires Zn(2+) as cofactor.

Its subcellular location is the periplasm. The catalysed reaction is 2 superoxide + 2 H(+) = H2O2 + O2. In terms of biological role, destroys radicals which are normally produced within the cells and which are toxic to biological systems. May function against extracytoplasmic toxic oxygen species. This Caulobacter vibrioides (strain ATCC 19089 / CIP 103742 / CB 15) (Caulobacter crescentus) protein is Superoxide dismutase [Cu-Zn] (sodC).